A 118-amino-acid chain; its full sequence is Peptidyl-prolyl cis-trans isomerase Pin1 (118 aa).

Disordered stretches follow at residues 1-37 (MSSEKVRASHILIKHQGSRRKSSWKDPDGSLISATTR) and 61-84 (LASRHSHCSSAKRGGDLGPFGRGQ). One can recognise a PpiC domain in the interval 3–118 (SEKVRASHIL…SGVHIIKRTG (116 aa)). Residues 12–22 (LIKHQGSRRKS) show a composition bias toward basic residues.

Belongs to the PpiC/parvulin rotamase family. The N-terminus is blocked. As to expression, expressed in roots, stems, leaves, flowers and seedlings.

The protein localises to the cytoplasm. Its subcellular location is the nucleus. The enzyme catalyses [protein]-peptidylproline (omega=180) = [protein]-peptidylproline (omega=0). Inhibited in vitro by juglone. Its function is as follows. Prolyl cis/trans isomerase with specificity for phospho-Ser-Pro bonds. The sequence is that of Peptidyl-prolyl cis-trans isomerase Pin1 (PARV12.8) from Digitalis lanata (Grecian foxglove).